The primary structure comprises 311 residues: Delta-1-pyrroline-5-carboxylate reductase kk1I (311 aa).

The first 31 residues, 1-31 (MTKRESNTLAVLGCGMVFLVSLLDLANRLLG), serve as a signal peptide directing secretion. N-linked (GlcNAc...) asparagine glycosylation occurs at asparagine 59.

It belongs to the pyrroline-5-carboxylate reductase family.

It functions in the pathway secondary metabolite biosynthesis. Its function is as follows. Delta-1-pyrroline-5-carboxylate reductase; part of the gene cluster that mediates the biosynthesis of KK-1, a novel cyclic depsipeptide with 10 residues which is a promising active compound with high activity against many plant pathogens, especially Botrytis cinerea. Within the pathway, kk1I catalyzes the synthesis of the L-pipecolic acid residue of KK-1 from delta-1-pyrroline-5-carboxylate (P5C), a metabolic intermediate of lysine. The nonribosomal peptide synthetase (NRPS) kk1B catalyzes the elongation and cyclization of the decapeptide chain composed of 1 D-lactic acid residue (D-Lac), 1 pipecolic acid residue (Pip), 1 aspartic acid residue (Asp), 1 isoleucine residue (Ile), 1 glycine residue (Gly), 1 tyrosine residue (Tyr) and 4 valine residues (Val). The Asp, Ile and 3 Val residues are N-methylated by the 5 methyltransferase domains from the NRPS (found in modules 3, 5, 6, 7 and 9), whereas the Tyr residue is O-methylated by the cluster encoded O-methyltransferase kk1A. The thioesterase kk1J is likely to be involved in the corrective mechanism of peptide chain synthesis. The D-lactate dehydrogenase kk1H is involved in the synthesis of D-lactic acid from pyruvic acid, which is recognized by the A domain of the first kk1B module. The pyrroline-5-carboxylate reductase kk1I is involved in the synthesis of the L-pipecolic acid residue of KK-1 from delta-1-pyrroline-5-carboxylate (P5C), a metabolic intermediate of lysine. It still is unclear how kk1C and kk1D are involved in the production of KK-1. The sequence is that of Delta-1-pyrroline-5-carboxylate reductase kk1I from Curvularia clavata.